The primary structure comprises 675 residues: Alpha-1,4-glucan:maltose-1-phosphate maltosyltransferase (675 aa).

K256, Q316, and D351 together coordinate alpha-maltose 1-phosphate. Catalysis depends on D386, which acts as the Nucleophile. N387 contributes to the alpha-maltose 1-phosphate binding site. Residue E415 is the Proton donor of the active site. 525-526 provides a ligand contact to alpha-maltose 1-phosphate; sequence KY.

The protein belongs to the glycosyl hydrolase 13 family. GlgE subfamily. In terms of assembly, homodimer.

It carries out the reaction alpha-maltose 1-phosphate + [(1-&gt;4)-alpha-D-glucosyl](n) = [(1-&gt;4)-alpha-D-glucosyl](n+2) + phosphate. Maltosyltransferase that uses maltose 1-phosphate (M1P) as the sugar donor to elongate linear or branched alpha-(1-&gt;4)-glucans. Is involved in a branched alpha-glucan biosynthetic pathway from trehalose, together with TreS, Mak and GlgB. The chain is Alpha-1,4-glucan:maltose-1-phosphate maltosyltransferase from Corynebacterium glutamicum (strain ATCC 13032 / DSM 20300 / JCM 1318 / BCRC 11384 / CCUG 27702 / LMG 3730 / NBRC 12168 / NCIMB 10025 / NRRL B-2784 / 534).